Reading from the N-terminus, the 1043-residue chain is Ack-related non-receptor tyrosine kinase (1043 aa).

In terms of domain architecture, Protein kinase spans 113–379 (ITLCKELGQG…SDIVAKFPER (267 aa)). ATP is bound by residues 119-127 (LGQGEFGSV) and K146. The Proton acceptor role is filled by D241. Positions 379-444 (RRAQSVRAVV…RPTDTVAHLG (66 aa)) constitute an SH3 domain. Residues 443-481 (LGSEPPCSNGTIENGFSEKEKGGKKNKKAEKESERERKK) form a disordered region. Residues 458–481 (FSEKEKGGKKNKKAEKESERERKK) show a composition bias toward basic and acidic residues. The CRIB domain maps to 484-498 (ISEPVGDVRHTCHVG). 4 disordered regions span residues 514-644 (MCPT…SAAN), 790-842 (KINE…GWSS), 859-898 (KQASVSPPPMSPTSSRLSTLDRSSISPAPPRPVTPPLSVR), and 932-993 (LIDG…RQFP). Low complexity predominate over residues 516 to 543 (PTSSSPSTSRGSQASPAPSHTSSSTTSS). Positions 610-624 (GNQHSVQVHDQFSSL) are enriched in polar residues. The segment covering 630–644 (SLTPTAPPLTASAAN) has biased composition (low complexity). The stretch at 785-812 (EQEVRKINEKSAREHRKTEDLLREERQK) forms a coiled coil. Residues 790-818 (KINEKSAREHRKTEDLLREERQKEQKPGE) show a composition bias toward basic and acidic residues. Polar residues predominate over residues 825–842 (PAESLYSTRTPQQEGWSS). Positions 870–884 (PTSSRLSTLDRSSIS) are enriched in low complexity.

Belongs to the protein kinase superfamily. Tyr protein kinase family. Mg(2+) serves as cofactor.

The enzyme catalyses L-tyrosyl-[protein] + ATP = O-phospho-L-tyrosyl-[protein] + ADP + H(+). It carries out the reaction L-seryl-[protein] + ATP = O-phospho-L-seryl-[protein] + ADP + H(+). It catalyses the reaction L-threonyl-[protein] + ATP = O-phospho-L-threonyl-[protein] + ADP + H(+). Probable tyrosine protein kinase which plays a role in vulva development, probably by acting as a negative regulator of the let-23/EGFR and let-60/ras pathway. Involved in the negative regulation of germline development. This Caenorhabditis elegans protein is Ack-related non-receptor tyrosine kinase.